Here is a 123-residue protein sequence, read N- to C-terminus: Large ribosomal subunit protein uL18 (123 aa).

The protein belongs to the universal ribosomal protein uL18 family. In terms of assembly, part of the 50S ribosomal subunit; part of the 5S rRNA/L5/L18/L25 subcomplex. Contacts the 5S and 23S rRNAs.

In terms of biological role, this is one of the proteins that bind and probably mediate the attachment of the 5S RNA into the large ribosomal subunit, where it forms part of the central protuberance. This is Large ribosomal subunit protein uL18 from Wolbachia pipientis wMel.